Reading from the N-terminus, the 161-residue chain is Allophycocyanin subunit alpha-B (161 aa).

Position 71 is an N4-methylasparagine (Asn-71). (2R,3E)-phycocyanobilin is bound at residue Cys-81.

Belongs to the phycobiliprotein family. In terms of assembly, heterohexamer of two alpha chains, one alpha-B chain and three beta chains. In terms of processing, contains one covalently linked bilin chromophore.

It is found in the cellular thylakoid membrane. In terms of biological role, light-harvesting photosynthetic bile pigment-protein from the phycobiliprotein complex. Allophycocyanin has a maximum absorption at approximately 654 nanometers. This Synechocystis sp. (strain ATCC 27184 / PCC 6803 / Kazusa) protein is Allophycocyanin subunit alpha-B (apcD).